A 286-amino-acid polypeptide reads, in one-letter code: Small ribosomal subunit protein uS15m (286 aa).

The transit peptide at 1–33 directs the protein to the mitochondrion; it reads MSIVGRNAILNLRISLCPLFMGKRSFVSSPVSN.

It belongs to the universal ribosomal protein uS15 family. In terms of assembly, component of the mitochondrial small ribosomal subunit (mt-SSU). Mature yeast 74S mitochondrial ribosomes consist of a small (37S) and a large (54S) subunit. The 37S small subunit contains a 15S ribosomal RNA (15S mt-rRNA) and 34 different proteins. The 54S large subunit contains a 21S rRNA (21S mt-rRNA) and 46 different proteins. The precursor is processed in two steps involving mitochondrial intermediate peptidase (MIP) and mitochondrial processing peptidase (MPP).

The protein resides in the mitochondrion. In terms of biological role, component of the mitochondrial ribosome (mitoribosome), a dedicated translation machinery responsible for the synthesis of mitochondrial genome-encoded proteins, including at least some of the essential transmembrane subunits of the mitochondrial respiratory chain. The mitoribosomes are attached to the mitochondrial inner membrane and translation products are cotranslationally integrated into the membrane. The sequence is that of Small ribosomal subunit protein uS15m (MRPS28) from Saccharomyces cerevisiae (strain ATCC 204508 / S288c) (Baker's yeast).